The sequence spans 130 residues: MKKQGILHRDLAALIASLGHGDLVVVADSGLPVPPGVPCIDLAVTKGVPSFLPVLEAILSEMVVENATVAEELKPNEQIIEALAGRLKPVQLHFINHESLKTCCRQARAVIRTGEWTPYANILLYAGVAF.

Catalysis depends on His-20, which acts as the Proton donor. Residues Asp-28, His-97, and 119 to 121 each bind substrate; that span reads YAN.

Belongs to the RbsD / FucU family. RbsD subfamily. As to quaternary structure, homodecamer.

The protein resides in the cytoplasm. The catalysed reaction is beta-D-ribopyranose = beta-D-ribofuranose. Its pathway is carbohydrate metabolism; D-ribose degradation; D-ribose 5-phosphate from beta-D-ribopyranose: step 1/2. Functionally, catalyzes the interconversion of beta-pyran and beta-furan forms of D-ribose. The protein is D-ribose pyranase of Heliobacterium modesticaldum (strain ATCC 51547 / Ice1).